We begin with the raw amino-acid sequence, 105 residues long: Large ribosomal subunit protein bL34m (105 aa).

A mitochondrion-targeting transit peptide spans 1-16; sequence MPLFARLCQPQSRRMF.

The protein belongs to the bacterial ribosomal protein bL34 family. In terms of assembly, component of the mitochondrial large ribosomal subunit (mt-LSU). Mature yeast 74S mitochondrial ribosomes consist of a small (37S) and a large (54S) subunit. The 37S small subunit contains a 15S ribosomal RNA (15S mt-rRNA) and 34 different proteins. The 54S large subunit contains a 21S rRNA (21S mt-rRNA) and 46 different proteins.

Its subcellular location is the mitochondrion. Its function is as follows. Component of the mitochondrial ribosome (mitoribosome), a dedicated translation machinery responsible for the synthesis of mitochondrial genome-encoded proteins, including at least some of the essential transmembrane subunits of the mitochondrial respiratory chain. The mitoribosomes are attached to the mitochondrial inner membrane and translation products are cotranslationally integrated into the membrane. This is Large ribosomal subunit protein bL34m from Saccharomyces cerevisiae (strain ATCC 204508 / S288c) (Baker's yeast).